The sequence spans 416 residues: Protein-lysine N-trimethyltransferase SMYD5 (416 aa).

One can recognise an SET domain in the interval 21 to 351 (GSVEVRYVDS…PGEEICISYL (331 aa)). The MYND-type zinc-finger motif lies at 98–136 (PELCSVRKDLHQNCPHCQVMYCSAECRLAAAEQYHQILC). Tyr-350 contributes to the S-adenosyl-L-methionine binding site. Residues 383-416 (EADDPNVTSEEEEEEDEEEGEPEDAELGDEMTDV) are disordered.

The protein belongs to the class V-like SAM-binding methyltransferase superfamily. Interacts with the N-CoR complex. Interacts with EHMT2 and CBX5. Post-translationally, ubiquitinated and degradaed by the proteasome in response to mild hypothermia (32 degrees Celsius), relieving repression of the SP1 gene.

It localises to the cytoplasm. The enzyme catalyses L-lysyl-[protein] + 3 S-adenosyl-L-methionine = N(6),N(6),N(6)-trimethyl-L-lysyl-[protein] + 3 S-adenosyl-L-homocysteine + 3 H(+). It catalyses the reaction L-lysyl(20)-[histone H4] + 3 S-adenosyl-L-methionine = N(6),N(6),N(6)-trimethyl-L-lysyl(20)-[histone H4] + 3 S-adenosyl-L-homocysteine + 3 H(+). The catalysed reaction is L-lysyl(36)-[histone H3] + 3 S-adenosyl-L-methionine = N(6),N(6),N(6)-trimethyl-L-lysyl(36)-[histone H3] + 3 S-adenosyl-L-homocysteine + 3 H(+). Protein-lysine N-trimethyltransferase that specifically catalyzes trimethylation of 'Lys-22' of the RPL40/eL40 subunit of the 60S ribosome, thereby promoting translation elongation and protein synthesis. May also act as a histone methyltransferase in the context of histone octamers, but not on nucleosome substrates: trimethylates 'Lys-36' of histone H3 and 'Lys-20' of histone H4 to form H3K36me3 and H4K20me3, respectively. The histone methyltransferase activity, which is independent of its SET domain, is however unsure in vivo. In association with the NCoR corepressor complex, involved in the repression of toll-like receptor 4 (TLR4)-target inflammatory genes in macrophages, possibly by catalyzing the formation of H4K20me3 at the gene promoters. Plays an important role in embryonic stem (ES) cell self-renewal and differentiation. Maintains genome stability of ES cells during differentiation through regulation of heterochromatin formation and repression of endogenous repetitive DNA elements by promoting H4K20me3 marks. Acts as a regulator of the hypothermia response: its degradation in response to mild hypothermia relieves the formation of H3K36me3 at gene promoters, allowing expression of the neuroprotective gene SP1. This chain is Protein-lysine N-trimethyltransferase SMYD5, found in Mus musculus (Mouse).